Consider the following 724-residue polypeptide: Small conductance calcium-activated potassium channel protein 3 (724 aa).

Basic and acidic residues predominate over residues 1-11; sequence MDTSGHFHDSG. Disordered regions lie at residues 1-161 and 232-251; these read MDTS…RDSN and ATHN…FPKA. Positions 34-58 are enriched in pro residues; sequence QPPPPPPPPAPPAAPQQPPGPPLQP. The segment covering 59 to 88 has biased composition (low complexity); the sequence is QPLQLQQQQQQQQQQPPHPLSQLAQLQSQP. The span at 105 to 125 shows a compositional bias: polar residues; that stretch reads PSSNSTAILHPSSRQGSQLNL. Positions 131–140 are enriched in low complexity; the sequence is GHSPSSTATS. Serine 160 is modified (phosphoserine). The span at 232 to 249 shows a compositional bias: polar residues; that stretch reads ATHNHQHAGTTASSTTFP. Residues 281 to 301 form a helical membrane-spanning segment; that stretch reads LIFGMFGIVVMVIETELSWGL. A helical transmembrane segment spans residues 308–328; it reads FSLALKCLISLSTIILLGLII. The helical transmembrane segment at 359–379 threads the bilayer; that stretch reads ISLEMLVCAIHPIPGEYKFFW. The chain crosses the membrane as a helical span at residues 398–418; the sequence is IILSIPMFLRLYLIARVMLLH. The chain crosses the membrane as a helical span at residues 447–467; sequence LMTICPGTVLLVFSISLWIIA. Residues 487–507 constitute an intramembrane region (pore-forming); sequence FLGAMWLISITFLSIGYGDMV. Residues 516-536 form a helical membrane-spanning segment; sequence VCLLTGIMGAGCTALVVAVVA. The calmodulin-binding stretch occupies residues 554–630; that stretch reads DTQLTKRIKN…LVDLSKMQNV (77 aa). A coiled-coil region spans residues 635-662; the sequence is ITELNDRSEDLEKQIGSLESKLEHLTAS. The segment at 702–724 is disordered; the sequence is LSDSPIGVSSTSFPTPYTSSSSC. Residues 710 to 724 are compositionally biased toward low complexity; that stretch reads SSTSFPTPYTSSSSC.

The protein belongs to the potassium channel KCNN family. KCa2.3/KCNN3 subfamily. Homodimer. Heteromultimer with KCNN2 or KCNN1; this modulates plasma membrane expression and consequently the small conductance calcium-activated potassium channel activity. The complex is composed of 4 channel subunits each of which binds to a calmodulin subunit which regulates the channel activity through calcium-binding. Interacts with CALM1.

It localises to the cell membrane. The protein localises to the cytoplasm. It is found in the myofibril. The protein resides in the sarcomere. Its subcellular location is the z line. It carries out the reaction K(+)(in) = K(+)(out). Inhibited by bee venom neurotoxin apamin. In terms of biological role, small conductance calcium-activated potassium channel that mediates the voltage-independent transmembrane transfer of potassium across the cell membrane through a constitutive interaction with calmodulin which binds the intracellular calcium allowing its opening. The current is characterized by a voltage-independent activation, an intracellular calcium concentration increase-dependent activation and a single-channel conductance of 10 picosiemens. Also presents an inwardly rectifying current, thus reducing its already small outward conductance of potassium ions, which is particularly the case when the membrane potential displays positive values, above + 20 mV. Activation is followed by membrane hyperpolarization. Thought to regulate neuronal excitability by contributing to the slow component of synaptic afterhyperpolarization. The chain is Small conductance calcium-activated potassium channel protein 3 from Sus scrofa (Pig).